Reading from the N-terminus, the 644-residue chain is Heat shock protein SSC3, mitochondrial (644 aa).

It belongs to the heat shock protein 70 family.

Its subcellular location is the mitochondrion matrix. The protein resides in the mitochondrion nucleoid. Its function is as follows. Plays a role in facilitating the assembly of some protein complexes inside the mitochondria. It may initiate the events that lead to refolding of imported precursors in the matrix space. The polypeptide is Heat shock protein SSC3, mitochondrial (ECM10) (Saccharomyces cerevisiae (strain ATCC 204508 / S288c) (Baker's yeast)).